Consider the following 325-residue polypeptide: Hydroxymethylglutaryl-CoA lyase, mitochondrial (325 aa).

A mitochondrion-targeting transit peptide spans Met1 to Gly27. In terms of domain architecture, Pyruvate carboxyltransferase spans Val33–Leu300. Residue Arg41 participates in substrate binding. Asp42 is a binding site for a divalent metal cation. The residue at position 48 (Lys48) is an N6-acetyllysine; alternate. Lys48 bears the N6-succinyllysine; alternate mark. Lys111 is subject to N6-acetyllysine. 2 positions are modified to N6-acetyllysine; alternate: Lys137 and Lys179. Residues Lys137 and Lys179 each carry the N6-succinyllysine; alternate modification. A divalent metal cation is bound by residues His233 and His235. Cys266 is an active-site residue. Asn275 serves as a coordination point for a divalent metal cation. Positions Cys323–Leu325 match the Microbody targeting signal motif. Lys324 is modified (N6-acetyllysine).

It belongs to the HMG-CoA lyase family. Homodimer; disulfide-linked. Can also form homotetramers.

It is found in the mitochondrion matrix. The protein resides in the peroxisome. The catalysed reaction is (3S)-3-hydroxy-3-methylglutaryl-CoA = acetoacetate + acetyl-CoA. Its pathway is metabolic intermediate metabolism; (S)-3-hydroxy-3-methylglutaryl-CoA degradation; acetoacetate from (S)-3-hydroxy-3-methylglutaryl-CoA: step 1/1. Functionally, mitochondrial 3-hydroxy-3-methylglutaryl-CoA lyase that catalyzes a cation-dependent cleavage of (S)-3-hydroxy-3-methylglutaryl-CoA into acetyl-CoA and acetoacetate, a key step in ketogenesis. Terminal step in leucine catabolism. Ketone bodies (beta-hydroxybutyrate, acetoacetate and acetone) are essential as an alternative source of energy to glucose, as lipid precursors and as regulators of metabolism. The sequence is that of Hydroxymethylglutaryl-CoA lyase, mitochondrial (HMGCL) from Pongo abelii (Sumatran orangutan).